A 182-amino-acid chain; its full sequence is Isopentenyl-diphosphate Delta-isomerase (182 aa).

Residues His-25 and His-32 each coordinate Mn(2+). A Nudix hydrolase domain is found at 30–164; it reads LLHLAFSSWL…PWAFSPWMVM (135 aa). Cys-67 is a catalytic residue. Residue His-69 participates in Mn(2+) binding. Glu-87 provides a ligand contact to Mg(2+). Residues Glu-114 and Glu-116 each coordinate Mn(2+). Glu-116 is a catalytic residue.

This sequence belongs to the IPP isomerase type 1 family. Homodimer. Mg(2+) is required as a cofactor. Mn(2+) serves as cofactor.

Its subcellular location is the cytoplasm. The catalysed reaction is isopentenyl diphosphate = dimethylallyl diphosphate. The protein operates within isoprenoid biosynthesis; dimethylallyl diphosphate biosynthesis; dimethylallyl diphosphate from isopentenyl diphosphate: step 1/1. Catalyzes the 1,3-allylic rearrangement of the homoallylic substrate isopentenyl (IPP) to its highly electrophilic allylic isomer, dimethylallyl diphosphate (DMAPP). The sequence is that of Isopentenyl-diphosphate Delta-isomerase from Shigella flexneri serotype 5b (strain 8401).